A 255-amino-acid polypeptide reads, in one-letter code: Testis-specific H1 histone (255 aa).

A disordered region spans residues 1–54; that stretch reads MEQALTGEAQSRWPRRGGSGAMAEAPGPSGESRGHSATQLPAEKTVGGPSRGCS. A Phosphoserine modification is found at Ser-56. Over residues 124-134 the composition is skewed to basic residues; sequence KVPKPRRKPGR. The tract at residues 124–255 is disordered; sequence KVPKPRRKPG…PKKPAQRTIQ (132 aa). The segment covering 142 to 152 has biased composition (low complexity); it reads RAPWRTPAAPR. Basic residues-rich tracts occupy residues 153-166 and 174-194; these read SSRR…KAAR and RNAR…RARP. Composition is skewed to basic and acidic residues over residues 195–230 and 238–248; these read RAKE…PRSG and KPREEKQEPKK.

It belongs to the histone H1/H5 family. As to expression, testis-specific.

The protein localises to the nucleus. It localises to the chromosome. In terms of biological role, essential for normal spermatogenesis and male fertility. Required for proper cell restructuring and DNA condensation during the elongation phase of spermiogenesis. Involved in the histone-protamine transition of sperm chromatin and the subsequent production of functional sperm. Binds both double-stranded and single-stranded DNA, ATP and protamine-1. The protein is Testis-specific H1 histone of Homo sapiens (Human).